The following is a 150-amino-acid chain: Large ribosomal subunit protein bL9 (150 aa).

Belongs to the bacterial ribosomal protein bL9 family.

Functionally, binds to the 23S rRNA. The chain is Large ribosomal subunit protein bL9 from Thioalkalivibrio sulfidiphilus (strain HL-EbGR7).